Consider the following 264-residue polypeptide: tRNA pseudouridine synthase A (264 aa).

Asp-51 acts as the Nucleophile in catalysis. Position 109 (Tyr-109) interacts with substrate.

Belongs to the tRNA pseudouridine synthase TruA family. Homodimer.

It catalyses the reaction uridine(38/39/40) in tRNA = pseudouridine(38/39/40) in tRNA. Its function is as follows. Formation of pseudouridine at positions 38, 39 and 40 in the anticodon stem and loop of transfer RNAs. This chain is tRNA pseudouridine synthase A, found in Vibrio atlanticus (strain LGP32) (Vibrio splendidus (strain Mel32)).